Consider the following 329-residue polypeptide: Large ribosomal subunit protein uL3 (329 aa).

This sequence belongs to the universal ribosomal protein uL3 family. As to quaternary structure, part of the 50S ribosomal subunit. Forms a cluster with proteins L14 and L24e.

In terms of biological role, one of the primary rRNA binding proteins, it binds directly near the 3'-end of the 23S rRNA, where it nucleates assembly of the 50S subunit. The sequence is that of Large ribosomal subunit protein uL3 from Picrophilus torridus (strain ATCC 700027 / DSM 9790 / JCM 10055 / NBRC 100828 / KAW 2/3).